We begin with the raw amino-acid sequence, 192 residues long: uncharacterized protein (192 aa).

The Nudix hydrolase domain occupies 29–160; it reads HRQAAVLIPI…PLDIYRRGDS (132 aa). The short motif at 67–89 is the Nudix box element; it reads GAVDDTDTSVIAAALREAEEEVA. Mg(2+)-binding residues include Glu83 and Glu87.

The protein belongs to the Nudix hydrolase family. PCD1 subfamily. The cofactor is Mn(2+). Mg(2+) is required as a cofactor.

In terms of biological role, probably mediates the hydrolysis of some nucleoside diphosphate derivatives. This is an uncharacterized protein from Escherichia fergusonii (strain ATCC 35469 / DSM 13698 / CCUG 18766 / IAM 14443 / JCM 21226 / LMG 7866 / NBRC 102419 / NCTC 12128 / CDC 0568-73).